A 640-amino-acid polypeptide reads, in one-letter code: Probable potassium transport system protein Kup 1 (640 aa).

Helical transmembrane passes span 24–44 (LGAL…TSPL), 67–87 (IASL…VLFV), 116–136 (VGPL…DGMI), 154–174 (PFFA…LFTI), 186–206 (FGPV…TEVV), 222–242 (TFLF…VLAV), 264–284 (WFAL…ALIL), 296–316 (MLVP…ATVI), 354–374 (IYIP…VVGF), 382–402 (AAYG…ALVV), 411–431 (LWLC…FLGA), and 436–456 (VTQG…LMAT).

Belongs to the HAK/KUP transporter (TC 2.A.72) family.

The protein resides in the cell inner membrane. The catalysed reaction is K(+)(in) + H(+)(in) = K(+)(out) + H(+)(out). Functionally, transport of potassium into the cell. Likely operates as a K(+):H(+) symporter. The sequence is that of Probable potassium transport system protein Kup 1 from Paramagnetospirillum magneticum (strain ATCC 700264 / AMB-1) (Magnetospirillum magneticum).